The sequence spans 1234 residues: MAPQQPQPTSQDWDVEFNQVRREKLFRDPPTDRTAYPALQAAVDPHIESFNALFRDDGKPSLLDHALAEIGTKTFLDGDERADPQGKNKLTIRYKSIELQKSQVPPTNRWAKNREIFPAECRERHVSYRGKLSATFEYRINDGEPHEFVRELGQMPIMVKSNKCHLQNNSPAQLVARKEESEELGGYFIVNGIEKLIRMLLVNRRNFPLAIVRPSFQNRGASYTPYGIIMRSVRPDETSQTNVLHYLSDGNVTFRFSWRKNEYLIPVMMIMKALVETNDREIFEGLVGPPQSKGVANTFLTDRVELLLRTYKKYGLYSKTQTRAYLGQKFRVVLGVPDTMSDYEVGTEFLRKIVLVHLGSQDVTEQQDADKFNMLLFMCRKLYALVAGDCAVDNPDAVQNQEILLGGFLYGQIIKERLEELLTVSFRASLRDYLRRNPTVSFQSDTFLKDFPIAIFRRANENIGQSLEYFLSTGNLVSPSGLDLQQVSGFTVVAEKLNFLRFISHFRMVHRGSFFAQLKTTTVRKLLPESWGFLCPVHTPDGSPCGLLNHLAHKCKIMTESVDASTISRLAFELGVVNISSAATSESVVVMLDGRIVGWCTPEECKSIAETLRYWKVNGENGVPLQLEIGYVPPSNGGSYPGLYMSSQPARMVRPVKYLPLQKEDFVGPQEQPYMSIACTEQEVIPGDSTHVEFDPTNILSILANMTPFSDFNQSPRNMYQCQMGKQTMGTPATALAHRTDNKMYRLQTGQTPVVRAPLHNTYGFDNFPNGMNAVVAVISYTGYDMDDAMILNKSAHERGFGHGSIYKTKKVSLKDDSRTRSAKSIVKMFGFAPNSTIRESTRDMLDNDGLPRVGRLLREGDVICAWHTVSADYNGQLVNRDGVTHYERYKDSEDAFVEEVRVIGADNGTEPLQTVSIKLRIPRSPVIGDKFSSRHGQKGVLSQKWPATDMPFSETGIQPDVIINPHAFPSRMTIGMFVESLAGKAGALHGLAQDSTPFKFDEQNTAGDYFGHQLMKAGYNYHGNEPLYSGITGEEFQADIYIGVVYYQRLRHMVNDKYQVRTTGPVVPTTGQPIKGRKKGGGIRVGEMERDALLAHGTSFLLQDRLLNCSDYSKSWMCRQCGSFLSTQPTVSPFIGKRKAVSTVRCRNCAVRLDDMEDVDLMQIDGEIWEDGSGTQWIGGENTTIVAVPGALKYLDVELAAMGIKLKYKVDKKDEIRRGQLVGKKAGDLMLTA.

The C4-type zinc finger occupies 1119–1150; sequence CRQCGSFLSTQPTVSPFIGKRKAVSTVRCRNC.

Belongs to the RNA polymerase beta chain family. In terms of assembly, component of the RNA polymerase I (Pol I) complex consisting of 14 subunits.

It is found in the nucleus. It localises to the nucleolus. The enzyme catalyses RNA(n) + a ribonucleoside 5'-triphosphate = RNA(n+1) + diphosphate. Its function is as follows. DNA-dependent RNA polymerase catalyzes the transcription of DNA into RNA using the four ribonucleoside triphosphates as substrates. Second largest core component of RNA polymerase I which synthesizes ribosomal RNA precursors. Proposed to contribute to the polymerase catalytic activity and forms the polymerase active center together with the largest subunit. Pol I is composed of mobile elements and RPA2 is part of the core element with the central large cleft and probably a clamp element that moves to open and close the cleft. This is DNA-directed RNA polymerase I subunit RPA2 (acr-2) from Neurospora crassa (strain ATCC 24698 / 74-OR23-1A / CBS 708.71 / DSM 1257 / FGSC 987).